Reading from the N-terminus, the 215-residue chain is Ceramide-1-phosphate transfer protein (215 aa).

Aspartate 57, lysine 61, arginine 107, arginine 111, and histidine 151 together coordinate an N-acylsphingoid base 1-phosphate.

This sequence belongs to the GLTP family.

Its subcellular location is the cytoplasm. The protein localises to the cytosol. It is found in the golgi apparatus. The protein resides in the trans-Golgi network membrane. It localises to the cell membrane. Its subcellular location is the endosome membrane. The protein localises to the nucleus outer membrane. The catalysed reaction is N-(hexadecanoyl)-sphing-4-enine-1-phosphate(in) = N-(hexadecanoyl)-sphing-4-enine-1-phosphate(out). The enzyme catalyses N-(9Z-octadecenoyl)-sphing-4-enine-1-phosphate(in) = N-(9Z-octadecenoyl)-sphing-4-enine-1-phosphate(out). Functionally, mediates the intracellular transfer of ceramide-1-phosphate (C1P) between organelle membranes and the cell membrane. Required for normal structure of the Golgi stacks. Can bind phosphoceramides with a variety of aliphatic chains, but has a preference for lipids with saturated C16:0 or monounsaturated C18:1 aliphatic chains, and is inefficient with phosphoceramides containing lignoceryl (C24:0). Plays a role in the regulation of the cellular levels of ceramide-1-phosphate, and thereby contributes to the regulation of phospholipase PLA2G4A activity and the release of arachidonic acid. Has no activity with galactosylceramide, lactosylceramide, sphingomyelin, phosphatidylcholine, phosphatidic acid and ceramide. C1P transfer is stimulated by phosphatidylserine in C1P source vesicles. Regulates autophagy and pyroptosis, but not apoptosis. The protein is Ceramide-1-phosphate transfer protein (cptp) of Xenopus tropicalis (Western clawed frog).